Here is a 484-residue protein sequence, read N- to C-terminus: Glycogen synthase 2 (484 aa).

Residue Arg-15 participates in ADP-alpha-D-glucose binding.

Belongs to the glycosyltransferase 1 family. Bacterial/plant glycogen synthase subfamily.

The catalysed reaction is [(1-&gt;4)-alpha-D-glucosyl](n) + ADP-alpha-D-glucose = [(1-&gt;4)-alpha-D-glucosyl](n+1) + ADP + H(+). It functions in the pathway glycan biosynthesis; glycogen biosynthesis. Functionally, synthesizes alpha-1,4-glucan chains using ADP-glucose. In Geobacter sulfurreducens (strain ATCC 51573 / DSM 12127 / PCA), this protein is Glycogen synthase 2.